The primary structure comprises 344 residues: Anthranilate phosphoribosyltransferase (344 aa).

Residues glycine 80, 83–84 (GD), threonine 88, 90–93 (NIST), 108–116 (KHGNRSISS), and serine 120 each bind 5-phospho-alpha-D-ribose 1-diphosphate. Residue glycine 80 participates in anthranilate binding. A Mg(2+)-binding site is contributed by serine 92. Asparagine 111 provides a ligand contact to anthranilate. Residue arginine 166 coordinates anthranilate. The Mg(2+) site is built by aspartate 229 and glutamate 230.

This sequence belongs to the anthranilate phosphoribosyltransferase family. Homodimer. The cofactor is Mg(2+).

It catalyses the reaction N-(5-phospho-beta-D-ribosyl)anthranilate + diphosphate = 5-phospho-alpha-D-ribose 1-diphosphate + anthranilate. The protein operates within amino-acid biosynthesis; L-tryptophan biosynthesis; L-tryptophan from chorismate: step 2/5. In terms of biological role, catalyzes the transfer of the phosphoribosyl group of 5-phosphorylribose-1-pyrophosphate (PRPP) to anthranilate to yield N-(5'-phosphoribosyl)-anthranilate (PRA). This chain is Anthranilate phosphoribosyltransferase, found in Chloroherpeton thalassium (strain ATCC 35110 / GB-78).